Reading from the N-terminus, the 72-residue chain is Lantibiotic lichenicidin VK21 A2 (72 aa).

A disordered region spans residues 1-21 (MKTMKNSAAREAFKGANHPAG). Positions 1–40 (MKTMKNSAAREAFKGANHPAGMVSEEELKALVGGNDVNPE) are excised as a propeptide. A 2-oxobutanoic acid modification is found at Thr41. 3 positions are modified to (Z)-2,3-didehydrobutyrine: Thr42, Thr45, and Thr46. Positions 47–51 (SSWTC) form a cross-link, lanthionine (Ser-Cys). Ser48 is modified (2,3-didehydroalanine (Ser)). Residues Thr53 and Thr57 each carry the (Z)-2,3-didehydrobutyrine modification. A cross-link (lanthionine (Ser-Cys)) is located at residues 59–63 (SASLC). Cross-links (beta-methyllanthionine (Thr-Cys)) lie at residues 65-68 (TTKC) and 69-72 (TSRC). Position 66 is a (Z)-2,3-didehydrobutyrine (Thr66).

In terms of processing, maturation of lantibiotics involves the enzymatic conversion of Thr, and Ser into dehydrated AA and the formation of thioether bonds with cysteine. This is followed by membrane translocation and cleavage of the modified precursor. Post-translationally, the 2,3-didehydrobutyrines are determined to be the Z-isomers.

Its subcellular location is the secreted. In terms of biological role, lanthionine-containing peptide antibiotic (lantibiotic) active on Gram-positive bacteria. The bactericidal activity of lantibiotics is based on depolarization of energized bacterial cytoplasmic membranes, initiated by the formation of aqueous transmembrane pores. When present individually, LchA2 exhibits activity towards B.subtilis L1 (IC(50)=30 uM), Rhodococcus sp. SS2 (IC(50)=16.6 uM), M.luteus B1314 (IC(50)=2.6 uM), B.megaterium VKM41 (IC(50)=2 uM), S.aureus 209p (IC(50)=20 uM), B.pumilus 2001, B.globigii I, B.amyloliquefaciens I, M.smegmatis 1171 and M.phlei 1291. However, when combined with LchA1, it displays much stronger activity against B.subtilis L1 (IC(50)=0.64 uM), Rhodococcus sp. SS2 (IC(50)=0.64 uM), M.luteus B1314 (IC(50)=0.09 uM), B.megaterium VKM41 (IC(50)=0.12 uM) and S.aureus 209p (IC(50)=0.64 uM). The activity of the combined LchA1 and LchA2 peptides is strongest at a molar ratio of 1. Even when applied at 17-fold concentration of the highest IC(50) values for Gram-positive bacteria, neither the individual nor the combined peptides display activity against Gram-negative bacteria P.aeruginosa PAO1, P.putida I-97 or E.coli C600. The sequence is that of Lantibiotic lichenicidin VK21 A2 from Bacillus licheniformis.